Consider the following 108-residue polypeptide: Nucleoid-associated protein GK0018 (108 aa).

The disordered stretch occupies residues 1-32; sequence MMRGGMGNMQKMLKQMQKMQKEMQKAQEELAE. Over residues 9 to 18 the composition is skewed to low complexity; the sequence is MQKMLKQMQK. Residues 19–32 are compositionally biased toward basic and acidic residues; the sequence is MQKEMQKAQEELAE.

It belongs to the YbaB/EbfC family. As to quaternary structure, homodimer.

It localises to the cytoplasm. It is found in the nucleoid. In terms of biological role, binds to DNA and alters its conformation. May be involved in regulation of gene expression, nucleoid organization and DNA protection. This chain is Nucleoid-associated protein GK0018, found in Geobacillus kaustophilus (strain HTA426).